Reading from the N-terminus, the 751-residue chain is Catalase-peroxidase (751 aa).

A signal peptide spans 1–12; the sequence is MSNETKCPFSHA. Residues 91–241 constitute a cross-link (tryptophyl-tyrosyl-methioninium (Trp-Tyr) (with M-267)); the sequence is WHSAGTYRIG…LAAVQMGLIY (151 aa). The Proton acceptor role is filled by His92. The segment at residues 241–267 is a cross-link (tryptophyl-tyrosyl-methioninium (Tyr-Met) (with W-91)); that stretch reads YVNPEGPDGNPDPLAAAHDIRESFGRM. His282 lines the heme b pocket.

This sequence belongs to the peroxidase family. Peroxidase/catalase subfamily. As to quaternary structure, homodimer or homotetramer. Requires heme b as cofactor. In terms of processing, formation of the three residue Trp-Tyr-Met cross-link is important for the catalase, but not the peroxidase activity of the enzyme.

The catalysed reaction is H2O2 + AH2 = A + 2 H2O. It catalyses the reaction 2 H2O2 = O2 + 2 H2O. Functionally, bifunctional enzyme with both catalase and broad-spectrum peroxidase activity. The sequence is that of Catalase-peroxidase from Cupriavidus necator (strain ATCC 17699 / DSM 428 / KCTC 22496 / NCIMB 10442 / H16 / Stanier 337) (Ralstonia eutropha).